The sequence spans 515 residues: MDEFHRCGKEDSFWQQCFLYPLFFQEDLYAISHDHYLDVSSSSRPMEHLSSNDQLSFLTVKRLIGQIRQQNHSIVLFVNCDPNPLADRKKSFYSESVLEALTLVLEVPFSIWSKSSVEGMNECKSFRSIHSIFPFLEDKFPHSNSILDARIPYSIHPEILVRTFRRWIRDAPSLHPLRSVLYDYRNSPENLQRSIIVVPRVNTRFFLFLLNYYVWECESILFSRLKRSSHSRSLSHGSFPQRTHFHRKIKHIIIFSRRNSLKSIWSLKDPKIHYVRYGERPIIAIKGADLLVKKCRYYLLIFRQFYFHLWSEPYRVCSHQLSKNCSSSLGYFLRVRMNPLLVRTKTLDELFIPVLITNEMDPIVPIVPIIGLLATEKFCDISGRPISKLSWTSLTDDDILDRFDQIWRNLFHYYSGSFDRDGLYRIKYILLLSCAKTLACKHKSTIRVVRKELGPELFKKSFSKEREFDSLPFSSKAAARSQRERIWHSDIPQINPLANSWQKIQDLKIENLFDQ.

Belongs to the intron maturase 2 family. MatK subfamily.

Its subcellular location is the plastid. The protein resides in the chloroplast. Its function is as follows. Usually encoded in the trnK tRNA gene intron. Probably assists in splicing its own and other chloroplast group II introns. In Pinus tabuliformis (Chinese red pine), this protein is Maturase K.